A 285-amino-acid polypeptide reads, in one-letter code: Tryptophan synthase alpha chain (285 aa).

Catalysis depends on proton acceptor residues Glu53 and Asp64.

Belongs to the TrpA family. Tetramer of two alpha and two beta chains.

It catalyses the reaction (1S,2R)-1-C-(indol-3-yl)glycerol 3-phosphate + L-serine = D-glyceraldehyde 3-phosphate + L-tryptophan + H2O. It functions in the pathway amino-acid biosynthesis; L-tryptophan biosynthesis; L-tryptophan from chorismate: step 5/5. The alpha subunit is responsible for the aldol cleavage of indoleglycerol phosphate to indole and glyceraldehyde 3-phosphate. This chain is Tryptophan synthase alpha chain, found in Bordetella bronchiseptica (strain ATCC BAA-588 / NCTC 13252 / RB50) (Alcaligenes bronchisepticus).